The following is a 336-amino-acid chain: Ketol-acid reductoisomerase (NADP(+)) (336 aa).

One can recognise a KARI N-terminal Rossmann domain in the interval Ala3–Thr183. Residues Tyr26–Gln29, Arg49, Ser52, Ser54, and Asp84–Gln87 each bind NADP(+). His109 is an active-site residue. Gly135 contributes to the NADP(+) binding site. In terms of domain architecture, KARI C-terminal knotted spans Thr184–Ile329. Residues Asp192, Glu196, Glu228, and Glu232 each coordinate Mg(2+). Ser253 contacts substrate.

Belongs to the ketol-acid reductoisomerase family. The cofactor is Mg(2+).

The enzyme catalyses (2R)-2,3-dihydroxy-3-methylbutanoate + NADP(+) = (2S)-2-acetolactate + NADPH + H(+). It catalyses the reaction (2R,3R)-2,3-dihydroxy-3-methylpentanoate + NADP(+) = (S)-2-ethyl-2-hydroxy-3-oxobutanoate + NADPH + H(+). It participates in amino-acid biosynthesis; L-isoleucine biosynthesis; L-isoleucine from 2-oxobutanoate: step 2/4. It functions in the pathway amino-acid biosynthesis; L-valine biosynthesis; L-valine from pyruvate: step 2/4. Involved in the biosynthesis of branched-chain amino acids (BCAA). Catalyzes an alkyl-migration followed by a ketol-acid reduction of (S)-2-acetolactate (S2AL) to yield (R)-2,3-dihydroxy-isovalerate. In the isomerase reaction, S2AL is rearranged via a Mg-dependent methyl migration to produce 3-hydroxy-3-methyl-2-ketobutyrate (HMKB). In the reductase reaction, this 2-ketoacid undergoes a metal-dependent reduction by NADPH to yield (R)-2,3-dihydroxy-isovalerate. The sequence is that of Ketol-acid reductoisomerase (NADP(+)) from Deinococcus radiodurans (strain ATCC 13939 / DSM 20539 / JCM 16871 / CCUG 27074 / LMG 4051 / NBRC 15346 / NCIMB 9279 / VKM B-1422 / R1).